The sequence spans 286 residues: Putative type II secretion system L-type protein YghE (286 aa).

A helical transmembrane segment spans residues Val-136–Leu-156.

This sequence belongs to the GSP L family.

The protein resides in the cell inner membrane. Functionally, involved in a type II secretion system (T2SS, formerly general secretion pathway, GSP) for the export of folded proteins across the outer membrane. The sequence is that of Putative type II secretion system L-type protein YghE from Escherichia coli (strain K12).